The following is a 350-amino-acid chain: tRNA uridine(34) hydroxylase (350 aa).

One can recognise a Rhodanese domain in the interval 146-240 (DDPDAVFIDM…YARRAREQGL (95 aa)). The active-site Cysteine persulfide intermediate is Cys-200. Positions 319–328 (RRRRAGRENG) are enriched in basic and acidic residues. The disordered stretch occupies residues 319–350 (RRRRAGRENGNKIFNKSRGRLNSKLSIPDPAE).

It belongs to the TrhO family.

It carries out the reaction uridine(34) in tRNA + AH2 + O2 = 5-hydroxyuridine(34) in tRNA + A + H2O. In terms of biological role, catalyzes oxygen-dependent 5-hydroxyuridine (ho5U) modification at position 34 in tRNAs. This Salmonella agona (strain SL483) protein is tRNA uridine(34) hydroxylase.